Reading from the N-terminus, the 666-residue chain is Enzymatic polyprotein (666 aa).

The active site involves Asp-54. In terms of domain architecture, Reverse transcriptase spans 215–445 (ENPIDPIKSK…EKINFLGLEI (231 aa)).

This sequence belongs to the caulimoviridae enzymatic polyprotein family.

The enzyme catalyses DNA(n) + a 2'-deoxyribonucleoside 5'-triphosphate = DNA(n+1) + diphosphate. Encodes for at least two polypeptides: protease (PR) and reverse transcriptase (RT). The protease processes the polyprotein in cis. Reverse transcriptase is multifunctional enzyme that converts the viral RNA genome into dsDNA in viral cytoplasmic capsids. This enzyme displays a DNA polymerase activity that can copy either DNA or RNA templates, and a ribonuclease H (RNase H) activity that cleaves the RNA strand of RNA-DNA heteroduplexes in a partially processive 3'- to 5'-endonucleasic mode. Neo-synthesized pregenomic RNA (pgRNA) are encapsidated, and reverse-transcribed inside the nucleocapsid. Partial (+)DNA is synthesized from the (-)DNA template and generates the relaxed circular DNA (RC-DNA) genome. After budding and infection, the RC-DNA migrates in the nucleus, and is converted into a plasmid-like covalently closed circular DNA (cccDNA). This is Enzymatic polyprotein from Figwort mosaic virus (strain DxS) (FMV).